A 389-amino-acid polypeptide reads, in one-letter code: 8-amino-7-oxononanoate synthase (389 aa).

Arginine 19 provides a ligand contact to substrate. Position 106–107 (glycine 106–tyrosine 107) interacts with pyridoxal 5'-phosphate. Histidine 131 contacts substrate. Residues serine 176, histidine 204, and threonine 233 each coordinate pyridoxal 5'-phosphate. The residue at position 236 (lysine 236) is an N6-(pyridoxal phosphate)lysine. Threonine 350 contributes to the substrate binding site.

Belongs to the class-II pyridoxal-phosphate-dependent aminotransferase family. BioF subfamily. Homodimer. Pyridoxal 5'-phosphate serves as cofactor.

The catalysed reaction is 6-carboxyhexanoyl-[ACP] + L-alanine + H(+) = (8S)-8-amino-7-oxononanoate + holo-[ACP] + CO2. The protein operates within cofactor biosynthesis; biotin biosynthesis. Its function is as follows. Catalyzes the decarboxylative condensation of pimeloyl-[acyl-carrier protein] and L-alanine to produce 8-amino-7-oxononanoate (AON), [acyl-carrier protein], and carbon dioxide. This chain is 8-amino-7-oxononanoate synthase, found in Ectopseudomonas mendocina (strain ymp) (Pseudomonas mendocina).